Consider the following 1366-residue polypeptide: DNA-directed RNA polymerase subunit beta' (1366 aa).

A compositionally biased stretch (basic residues) spans 1-20 (MTSSKPKKTSRVRKTTKNSK). The disordered stretch occupies residues 1-37 (MTSSKPKKTSRVRKTTKNSKKNNPVTMPVLPKTPPSF). Zn(2+)-binding residues include cysteine 248, cysteine 315, cysteine 322, and cysteine 325. A disordered region spans residues 1292 to 1366 (TVDMPQSPAV…LQEEGLLSDE (75 aa)). Residues 1354–1366 (LEGLQEEGLLSDE) show a composition bias toward low complexity.

Belongs to the RNA polymerase beta' chain family. RpoC2 subfamily. In cyanobacteria the RNAP catalytic core is composed of 2 alpha, 1 beta, 1 beta', 1 gamma and 1 omega subunit. When a sigma factor is associated with the core the holoenzyme is formed, which can initiate transcription. It depends on Zn(2+) as a cofactor.

The catalysed reaction is RNA(n) + a ribonucleoside 5'-triphosphate = RNA(n+1) + diphosphate. DNA-dependent RNA polymerase catalyzes the transcription of DNA into RNA using the four ribonucleoside triphosphates as substrates. The chain is DNA-directed RNA polymerase subunit beta' from Prochlorococcus marinus (strain MIT 9215).